Here is a 126-residue protein sequence, read N- to C-terminus: uncharacterized protein (126 aa).

The VOC domain maps to 4–126 (RIDHTGIMVR…DGEWIEFFQR (123 aa)). Residues His-7, Glu-42, His-74, and Glu-122 each coordinate a divalent metal cation.

The protein belongs to the glyoxalase I family.

This is an uncharacterized protein from Bacillus subtilis (strain 168).